Consider the following 177-residue polypeptide: MRTEIEIPDEVTATMDHLEVTVEGPNGSVTRRLWYPDITVDVEDGAVVIETDDDNAKTRSTVGTFESHVTNMFHGVTEGWEYSMEVFYSHFPMQVSVEGGDIVIENFLGEKAPRKTPVRGDTSVEVDGEELTVSGPSIEDVGQTAADIEQLTRVSDKDTRVFQDGVYITETPDRGDV.

It belongs to the universal ribosomal protein uL6 family. In terms of assembly, part of the 50S ribosomal subunit.

Its function is as follows. This protein binds to the 23S rRNA, and is important in its secondary structure. It is located near the subunit interface in the base of the L7/L12 stalk, and near the tRNA binding site of the peptidyltransferase center. This is Large ribosomal subunit protein uL6 from Natronomonas pharaonis (strain ATCC 35678 / DSM 2160 / CIP 103997 / JCM 8858 / NBRC 14720 / NCIMB 2260 / Gabara) (Halobacterium pharaonis).